The following is a 426-amino-acid chain: Alpha/beta hydrolase pydG (426 aa).

Belongs to the AB hydrolase superfamily. As to quaternary structure, homodimer.

It functions in the pathway mycotoxin biosynthesis. Functionally, alpha/beta hydrolasee; part of the gene cluster that mediates the biosynthesis of pyrrocidines, fungal natural products containing a macrocyclic para-cyclophane connected to a decahydrofluorene ring system that show potent antibiotic activities toward Gram-negative bacteria. Within the pathway, pydG catalyzes the Knoevenagel condensation that affords the 3-pyrrolin-2-one ring, using as substrate the polyketide-tyrosyl acyl thioester product of pydA. The pathway begins with the PKS-NRPS pydA which, with the help of the trans-enoyl reductase pydC, synthesizes the polyketide-tyrosyl acyl thioester product which can be reductively off-loaded by the terminal reductase (R) domain in pydA. The alpha/beta hydrolase pydG is then required to catalyze the subsequent Knoevenagel condensation that affords the 3-pyrrolin-2-one ring, whereas the four proteins pydB, pydE, pydX and pydZ then function synergistically to form the cyclophane. PydB and the membrane-bound pydX and pydZ are lipid-binding proteins that can sequester and mold the pdyG product into the inverse S-shape. Binding of the medium chain reductase pydE to the complex would trigger the cascade oxidative cyclization. PydY is involved in the Diels-Alder cycloaddition that forms the decahydrofluorene core. Additional non-enzymatic hydroxylation yields pyrrocidine A2 which can be further reduced into pyrrocidine B by an endogenous reductase. This chain is Alpha/beta hydrolase pydG, found in Acremonium sp.